Consider the following 361-residue polypeptide: MDMALPVSAIGFEGFEKRLEISFFEPGLFADPNGKGLRSLSKAQLDEILGPAECTIVDSLSNDDVDSYVLSESSLFVYSYKIIIKTCGTTKLLLAIPPILKLAETLSLKVQDVRYTRGSFIFPGAQSFPHRHFSEEVAVLDGYFGKLAAGSKAVIMGSPDKAQKWHVYSASAGPIQSNDPVYTLEMCMTGLDREKASVFYKTEGSSAAHMTVRSGIRKILPNSEICDFEFEPCGYSMNSIEGAALSTIHITPEDGFSYASFEAVGYDMKTMKLGPLVERVLACFEPDEFSIALHADVATKLLERVCSVDVKGYSLAEWSPEEFGKGGSIVYQKFTRTPFCGSPKSVLKGCWKEDEEKEEKE.

Residues Glu13 and Glu16 contribute to the active site. The Schiff-base intermediate with substrate; via pyruvic acid role is filled by Ser73. Ser73 carries the pyruvic acid (Ser); by autocatalysis modification. Catalysis depends on Cys87, which acts as the Proton donor; for catalytic activity. Residues Ser236 and His249 each act as proton acceptor; for processing activity in the active site.

Belongs to the eukaryotic AdoMetDC family. Pyruvate serves as cofactor. Is synthesized initially as an inactive proenzyme. Formation of the active enzyme involves a self-maturation process in which the active site pyruvoyl group is generated from an internal serine residue via an autocatalytic post-translational modification. Two non-identical subunits are generated from the proenzyme in this reaction, and the pyruvate is formed at the N-terminus of the alpha chain, which is derived from the carboxyl end of the proenzyme. The post-translation cleavage follows an unusual pathway, termed non-hydrolytic serinolysis, in which the side chain hydroxyl group of the serine supplies its oxygen atom to form the C-terminus of the beta chain, while the remainder of the serine residue undergoes an oxidative deamination to produce ammonia and the pyruvoyl group blocking the N-terminus of the alpha chain.

It catalyses the reaction S-adenosyl-L-methionine + H(+) = S-adenosyl 3-(methylsulfanyl)propylamine + CO2. It functions in the pathway amine and polyamine biosynthesis; S-adenosylmethioninamine biosynthesis; S-adenosylmethioninamine from S-adenosyl-L-methionine: step 1/1. The protein is S-adenosylmethionine decarboxylase proenzyme (SAMDC1) of Nicotiana sylvestris (Wood tobacco).